A 419-amino-acid chain; its full sequence is Erythromycin esterase type II (419 aa).

In terms of biological role, this enzyme confers resistance to erythromycin through inactivation by hydrolyzing the lactone ring of the antibiotic. In Escherichia coli, this protein is Erythromycin esterase type II (ereB).